A 142-amino-acid polypeptide reads, in one-letter code: Large ribosomal subunit protein uL13 (142 aa).

The protein belongs to the universal ribosomal protein uL13 family. As to quaternary structure, part of the 50S ribosomal subunit.

In terms of biological role, this protein is one of the early assembly proteins of the 50S ribosomal subunit, although it is not seen to bind rRNA by itself. It is important during the early stages of 50S assembly. The protein is Large ribosomal subunit protein uL13 of Syntrophus aciditrophicus (strain SB).